Reading from the N-terminus, the 417-residue chain is MKYKVLTLCLSAALFAPIAPTMASTDNQADMVLDQVLVLSRHNLRTPIVNTGILTEVTDKKWPDWDAKSGYLTTQGGALEVYMGHYFREWIDQNKLLADELCPTSNEDIYLYTNSLQRTIATAQFFAAGAFPGCKVNIHHQPEIGKMDPVFNPIITNGSPEFKQKALAAMDDYLKGLSLKAGYEELDTVLNIKDSQKCKTDKLCNLDSQKNSFIIEADKEPGVSGPLKIANSAVDAIDLQYYEGFPADQVAWGLVDTPEKWKKLNTLKNAYQETLFTPKIIAKNVAHPILNYIDKGFVSVDKGETAKFIFLVGHDSNIASLMSAMDFKPYQLAQQYEHTPIGGKLVFQRWTDKQTKKDFMKVEYVYQTADQLRDNAYLSLETPPKHVTLELKDCPVDKNGYCSWEDFQKVMAKALEQ.

The first 23 residues, Met1 to Ala23, serve as a signal peptide directing secretion. Position 41 (Arg41) interacts with substrate. Residue His42 is the Nucleophile of the active site. Substrate is bound by residues Arg45, Arg118, and Glu220. Residue Asp315 is the Proton donor of the active site.

It belongs to the histidine acid phosphatase family. As to quaternary structure, homodimer.

It localises to the periplasm. It carries out the reaction alpha-D-glucose 1-phosphate + H2O = D-glucose + phosphate. In Providencia rettgeri, this protein is Glucose-1-phosphatase (agp).